Here is a 192-residue protein sequence, read N- to C-terminus: MAQMYFYYSAMNAGKSTTLLQSSFNYRERGMRPVIFTAAIDDRFGTGKVSSRIGLEEDAELYNKSDDLWSKLSMMHADTHIDCVLIDECQFLTKEQVYQLTEVVDKLHIPVLCYGLRSDFRGELFDGSRYLLSWADKLVELKTICHCGRKANMVIRQDEAGHAIADGDQVEIGGNDRYVSVCRKHYKEALGR.

ATP contacts are provided by residues 9-16 and 87-90; these read SAMNAGKS and DECQ. Glu88 acts as the Proton acceptor in catalysis. Residues Cys145, Cys147, Cys182, and His185 each contribute to the Zn(2+) site.

The protein belongs to the thymidine kinase family. Homotetramer.

The protein localises to the cytoplasm. The catalysed reaction is thymidine + ATP = dTMP + ADP + H(+). This Photobacterium profundum (strain SS9) protein is Thymidine kinase.